Reading from the N-terminus, the 95-residue chain is UPF0235 protein Swoo_1329 (95 aa).

It belongs to the UPF0235 family.

The protein is UPF0235 protein Swoo_1329 of Shewanella woodyi (strain ATCC 51908 / MS32).